Reading from the N-terminus, the 594-residue chain is UvrABC system protein C (594 aa).

A GIY-YIG domain is found at 14–91 (DQPGCYLMKD…IKKYDPKYNI (78 aa)). The 36-residue stretch at 196–231 (KEIRSELETKMYEASEKLEFERAKELRDQIAHIDAI) folds into the UVR domain.

It belongs to the UvrC family. Interacts with UvrB in an incision complex.

It localises to the cytoplasm. Its function is as follows. The UvrABC repair system catalyzes the recognition and processing of DNA lesions. UvrC both incises the 5' and 3' sides of the lesion. The N-terminal half is responsible for the 3' incision and the C-terminal half is responsible for the 5' incision. In Bacillus mycoides (strain KBAB4) (Bacillus weihenstephanensis), this protein is UvrABC system protein C.